We begin with the raw amino-acid sequence, 417 residues long: Acetyltransferase cdmC (417 aa).

Residue asparagine 64 is glycosylated (N-linked (GlcNAc...) asparagine). The next 3 helical transmembrane spans lie at 308–328 (IPDG…GYLV), 357–377 (GIFW…YPLL), and 389–409 (LVES…AFIL).

Belongs to the wax synthase family.

Its subcellular location is the membrane. The enzyme catalyses chrodrimanin A + acetyl-CoA = chrodrimanin B + CoA. The protein operates within secondary metabolite biosynthesis; terpenoid biosynthesis. Functionally, acetyltransferase; part of the gene cluster that mediates the biosynthesis of chrodrimanin B, a meroterpenoid that acts as a potent blocker of insect GABA-gated chloride channels. The first step of the pathway is the biosynthesis of 6-hydroxymellein by the polyketide synthase cdmE. The prenyltransferase cdmH acts as a 6-hydroxymellein 5-farnesyltransferase and produces the hydrophobic metabolite verruculide C. The FAD-dependent monooxygenase cdmI further converts verruculide C into verruculide B. The terpene cyclase cdmG then produced the pentacyclic molecule 3-hydroxypentacecilide A, the backbone structure of chrodrimanin B, via folding the farnesyl moiety of the substrate into the chair-boat conformation. The short-chain dehydrogenase/reductase cdmF functions as the 3-OH dehydrogenase that oxidizes the C-3 hydroxyl group of 3-hydroxypentacecilide A and produces chrodrimanin C, the dehydrogenated product of 3-hydroxypentacecilide A. The cytochrome P450 monooxygenase cdmJ then accepts both 3-hydroxypentacecilide A and chrodrimanin C and functions as a C-7-beta-hydroxylase to produce respectively chrodrimanin H and chrodrimanin F. The dioxygenase cdmA accepts chrodrimanin H to afford chrodrimanin E, which is further transformed to chrodrimanin A by the dioxygenase cdmD. CdmA can also accept chrodrimanin C as substrate to convert it into verruculide A, which is further converted into chrodrimanin T by cdmD. The last step of the biosynthesis is proposed to be performed by the acetyltransferase cdmC which acetylates chrodrimanin A to yield chrodrimanin B. The pathway may also lead to the production of additional shunt products, including chrodrimanins T and U. The polypeptide is Acetyltransferase cdmC (Talaromyces verruculosus (Penicillium verruculosum)).